The chain runs to 143 residues: Transcription antitermination protein NusB (143 aa).

It belongs to the NusB family.

Its function is as follows. Involved in transcription antitermination. Required for transcription of ribosomal RNA (rRNA) genes. Binds specifically to the boxA antiterminator sequence of the ribosomal RNA (rrn) operons. This is Transcription antitermination protein NusB from Clostridium botulinum (strain ATCC 19397 / Type A).